The following is a 507-amino-acid chain: Autophagy-related protein 22 (507 aa).

Transmembrane regions (helical) follow at residues 24–44 (VFGW…AMST), 90–110 (SFAL…VISV), 126–146 (VLLS…LLRG), 150–170 (YILA…NVVG), 203–223 (RGSG…VWLL), and 234–254 (VAVL…IWML). A glycan (N-linked (GlcNAc...) asparagine) is linked at N262. The next 6 membrane-spanning stretches (helical) occupy residues 295–315 (VLIF…INSA), 329–349 (VNLV…AYFV), 365–385 (LIYL…GFVF), 393–413 (PFEM…LAAV), 433–453 (LFSI…GLIT), and 462–482 (SFYF…ALNV). A glycan (N-linked (GlcNAc...) asparagine) is linked at N496.

The protein belongs to the ATG22 family.

It is found in the vacuole membrane. Functionally, vacuolar effluxer which mediate the efflux of amino acids resulting from autophagic degradation. The release of autophagic amino acids allows the maintenance of protein synthesis and viability during nitrogen starvation. This is Autophagy-related protein 22 (ATG22) from Eremothecium gossypii (strain ATCC 10895 / CBS 109.51 / FGSC 9923 / NRRL Y-1056) (Yeast).